Reading from the N-terminus, the 399-residue chain is MMNLSAAANGRDEFPPYVVPSNAAAPPPSLLPTMEQQQESSIHREHHQLLGYNLEANSLALLPPSNAAAAHHHTTFAGGHSPHDILHFYTPPPSAASHYLAAAAGNPYSHLVSAPGTTFHQTSSSYYPPAAAAQAAPEYYFPTLVSSAEENMASFAATQLGLNLGYRTYFPPRGGYTYGHHPPRCQAEGCKADLSSAKRYHRRHKVCEHHSKAPVVVTAGGLHQRFCQQCSRFHLLDEFDDAKKSCRKRLADHNRRRRKSKPSDADAGDKKRAHANKAAAAKDKAESSSKNMDIGDGLGAQILGSALLSKEQDQTMDLGEVVKEAVDPKGKASMQQHYGFPFHSSSAGSCFPQTQAVSSDTTSNIGQVQEPSLGFHHQHHQHSNILQLGQAMFDLDFDH.

Residues 1–28 are disordered; it reads MMNLSAAANGRDEFPPYVVPSNAAAPPP. Residues 15–24 are compositionally biased toward low complexity; the sequence is PPYVVPSNAA. The SBP-type zinc-finger motif lies at 182 to 260; it reads PPRCQAEGCK…ADHNRRRRKS (79 aa). The Zn(2+) site is built by Cys185, Cys190, Cys207, His210, Cys227, Cys230, His234, and Cys246. A Bipartite nuclear localization signal motif is present at residues 243-259; the sequence is KKSCRKRLADHNRRRRK. Positions 250–292 are disordered; sequence LADHNRRRRKSKPSDADAGDKKRAHANKAAAAKDKAESSSKNM. The segment covering 261–270 has biased composition (basic and acidic residues); that stretch reads KPSDADAGDK.

In terms of tissue distribution, leaf ligular region, blade and sheath.

It localises to the nucleus. Its function is as follows. Involved in the formation of ligules and auricles during leaf organogenesis. The chain is Protein LIGULELESS 1 (LG1) from Zea mays (Maize).